The chain runs to 457 residues: Endo-1,3(4)-beta-glucanase ARB_04519 (457 aa).

The N-terminal stretch at 1–18 (MRTTGLLLLGALAELGSA) is a signal peptide. Residues 19-319 (TYILEDDYQP…YMKVYQQGTA (301 aa)) form the GH16 domain. Catalysis depends on Glu130, which acts as the Nucleophile. Glu135 acts as the Proton donor in catalysis. N-linked (GlcNAc...) asparagine glycosylation occurs at Asn200. The interval 318–397 (TAPTKPSQAP…DSCPPPTQPA (80 aa)) is disordered. A compositionally biased stretch (low complexity) spans 333–352 (TPALPTMKSTSTVSSMVSAT). The segment covering 353-362 (QPAPTASNPT) has biased composition (polar residues). The span at 368–378 (PSSSSSNNGPQ) shows a compositional bias: low complexity.

This sequence belongs to the glycosyl hydrolase 16 family.

It localises to the secreted. It catalyses the reaction Endohydrolysis of (1-&gt;3)- or (1-&gt;4)-linkages in beta-D-glucans when the glucose residue whose reducing group is involved in the linkage to be hydrolyzed is itself substituted at C-3.. Its function is as follows. Mixed-linked glucanase involved in the degradation of complex natural cellulosic substrates. Active on laminarin. lichenan, soluble carboxymethyl cellulose but not on pustulan. The chain is Endo-1,3(4)-beta-glucanase ARB_04519 from Arthroderma benhamiae (strain ATCC MYA-4681 / CBS 112371) (Trichophyton mentagrophytes).